The following is a 256-amino-acid chain: Thiazole synthase (256 aa).

Lys-95 functions as the Schiff-base intermediate with DXP in the catalytic mechanism. Residues Gly-156, 182-183 (AG), and 204-205 (NT) each bind 1-deoxy-D-xylulose 5-phosphate.

The protein belongs to the ThiG family. As to quaternary structure, homotetramer. Forms heterodimers with either ThiH or ThiS.

The protein resides in the cytoplasm. The catalysed reaction is [ThiS sulfur-carrier protein]-C-terminal-Gly-aminoethanethioate + 2-iminoacetate + 1-deoxy-D-xylulose 5-phosphate = [ThiS sulfur-carrier protein]-C-terminal Gly-Gly + 2-[(2R,5Z)-2-carboxy-4-methylthiazol-5(2H)-ylidene]ethyl phosphate + 2 H2O + H(+). It participates in cofactor biosynthesis; thiamine diphosphate biosynthesis. Catalyzes the rearrangement of 1-deoxy-D-xylulose 5-phosphate (DXP) to produce the thiazole phosphate moiety of thiamine. Sulfur is provided by the thiocarboxylate moiety of the carrier protein ThiS. In vitro, sulfur can be provided by H(2)S. This chain is Thiazole synthase, found in Idiomarina loihiensis (strain ATCC BAA-735 / DSM 15497 / L2-TR).